The primary structure comprises 480 residues: UDP-N-acetylmuramate--L-alanine ligase (480 aa).

122 to 128 (GTHGKTT) is an ATP binding site.

This sequence belongs to the MurCDEF family.

It is found in the cytoplasm. The catalysed reaction is UDP-N-acetyl-alpha-D-muramate + L-alanine + ATP = UDP-N-acetyl-alpha-D-muramoyl-L-alanine + ADP + phosphate + H(+). The protein operates within cell wall biogenesis; peptidoglycan biosynthesis. Functionally, cell wall formation. This chain is UDP-N-acetylmuramate--L-alanine ligase, found in Pseudomonas aeruginosa (strain LESB58).